The chain runs to 233 residues: MTALRQKTLAAAAALDYIESGMTLGLGSGSTAEIFLRLLGEKIKDGLDVRGVPTSQRTAQIAAENGVPLIDVDHVNNIAITIDGADEVDGRFQLIKGGGACLLREKIIAHASDLMIVMVDESKLVATLGKFPLPVEVDRFGFSLTASQVYEALRRAGIKSPDVQLRRKGDGLEPLVTDGGNYILDCACEAIPDAGAVDRALKAIPGVVEHGLFINLARVVIVGEDGEARVMEL.

Substrate contacts are provided by residues 28–31 (SGST), 83–86 (DGAD), and 96–99 (KGGG). E105 acts as the Proton acceptor in catalysis. Substrate is bound at residue K123.

This sequence belongs to the ribose 5-phosphate isomerase family. In terms of assembly, homodimer.

It carries out the reaction aldehydo-D-ribose 5-phosphate = D-ribulose 5-phosphate. Its pathway is carbohydrate degradation; pentose phosphate pathway; D-ribose 5-phosphate from D-ribulose 5-phosphate (non-oxidative stage): step 1/1. Functionally, catalyzes the reversible conversion of ribose-5-phosphate to ribulose 5-phosphate. This chain is Ribose-5-phosphate isomerase A, found in Maricaulis maris (strain MCS10) (Caulobacter maris).